A 73-amino-acid polypeptide reads, in one-letter code: Mauriporin (73 aa).

Positions 1 to 22 are cleaved as a signal peptide; that stretch reads MNKKTLLVIFFITMLIVDEVNS.

The protein belongs to the non-disulfide-bridged peptide (NDBP) superfamily. Long chain multifunctional peptide (group 2) family. Expressed by the venom gland.

It is found in the secreted. The protein resides in the target cell membrane. In terms of biological role, amphipathic peptide that displays potent antimicrobial activities against a range of Gram-positive and Gram-negative planktonic bacteria with MIC values in the range 5 uM to 10 uM. In more details, it is active on Listeria ivanovii (MIC=5 uM), Staphylococcus epidermidis (MIC=10 uM), Salmonella enterica (MIC=5 uM), Pseudomonas aeruginosa (ATCC 27853) (MIC=5 uM), Acinetobacter baumannii (MIC=5 uM), Klebsiella pneumoniae (MIC=5 uM), Escherichia coli (MIC=7.5 uM), Salmonella typhimurium (MIC=7.5 uM), Pseudomonas aeruginosa (ATCC 9027) (MIC=10 uM). Is also able to prevent P.aeruginosa biofilm formation while showing weak hemolytic activity towards human erythrocytes. Probably induces bacterial cell death through membrane permeabilization. Moreover, shows DNA-binding activities. Also exerts potent selective cytotoxic and antiproliferative activity against three different prostate cancer cell lines (IC(50)=4.4-7.8 uM), compared to non-tumorigenic cell lines (IC(50)=59.7 uM in Vero and 62.5 uM in HUVEC cells). This peptide possibly exerts its cytotoxic activity through a necrotic mode of cell death. Only shows diminished hemolytic activity against sheep erythrocytes. Does not induce cell death through apoptosis and consequently is not acting upon an intracellular target. This chain is Mauriporin, found in Androctonus mauritanicus (Fat-tailed scorpion).